Here is a 310-residue protein sequence, read N- to C-terminus: Ribosomal protein uL3 glutamine methyltransferase (310 aa).

It belongs to the protein N5-glutamine methyltransferase family. PrmB subfamily.

The enzyme catalyses L-glutaminyl-[ribosomal protein uL3] + S-adenosyl-L-methionine = N(5)-methyl-L-glutaminyl-[ribosomal protein uL3] + S-adenosyl-L-homocysteine + H(+). Its function is as follows. Methylates large ribosomal subunit protein uL3 on a specific glutamine residue. The sequence is that of Ribosomal protein uL3 glutamine methyltransferase from Yersinia pestis.